The primary structure comprises 445 residues: Serine protease inhibitor A3F (445 aa).

N-linked (GlcNAc...) asparagine glycosylation is found at asparagine 28, asparagine 94, asparagine 174, and asparagine 259. An RCL region spans residues 357–382 (GTEAAAGTGYQNLQCCQGVIYSMKIY).

This sequence belongs to the serpin family.

The protein is Serine protease inhibitor A3F (Serpina3f) of Mus musculus (Mouse).